The following is a 236-amino-acid chain: Purine nucleoside phosphorylase DeoD-type 2 (236 aa).

His-5 serves as a coordination point for a purine D-ribonucleoside. Residues Gly-21, Arg-25, Arg-44, and 88–91 (RVGS) each bind phosphate. A purine D-ribonucleoside-binding positions include 180–182 (DME) and 204–205 (SD). Asp-205 serves as the catalytic Proton donor.

Belongs to the PNP/UDP phosphorylase family. Homohexamer; trimer of homodimers.

The enzyme catalyses a purine D-ribonucleoside + phosphate = a purine nucleobase + alpha-D-ribose 1-phosphate. It catalyses the reaction a purine 2'-deoxy-D-ribonucleoside + phosphate = a purine nucleobase + 2-deoxy-alpha-D-ribose 1-phosphate. In terms of biological role, catalyzes the reversible phosphorolytic breakdown of the N-glycosidic bond in the beta-(deoxy)ribonucleoside molecules, with the formation of the corresponding free purine bases and pentose-1-phosphate. This chain is Purine nucleoside phosphorylase DeoD-type 2, found in Vibrio vulnificus (strain CMCP6).